The following is a 428-amino-acid chain: GTPase HflX (428 aa).

The Hflx-type G domain maps to 214–374; it reads PVVAIVGYTN…AIERELFKET (161 aa). GTP-binding positions include 220-227, 245-249, 267-270, 333-336, and 352-354; these read GYTNAGKS, FATLD, DTVG, NKID, and SAK. Positions 227 and 247 each coordinate Mg(2+).

Belongs to the TRAFAC class OBG-HflX-like GTPase superfamily. HflX GTPase family. In terms of assembly, monomer. Associates with the 50S ribosomal subunit. Mg(2+) is required as a cofactor.

The protein resides in the cytoplasm. GTPase that associates with the 50S ribosomal subunit and may have a role during protein synthesis or ribosome biogenesis. This Caldanaerobacter subterraneus subsp. tengcongensis (strain DSM 15242 / JCM 11007 / NBRC 100824 / MB4) (Thermoanaerobacter tengcongensis) protein is GTPase HflX.